The primary structure comprises 333 residues: Anthranilate phosphoribosyltransferase (333 aa).

5-phospho-alpha-D-ribose 1-diphosphate is bound by residues glycine 81, 84–85, threonine 89, 91–94, 109–117, and serine 121; these read GD, NIST, and KHGNRSVSS. Glycine 81 is a binding site for anthranilate. Serine 93 contacts Mg(2+). An anthranilate-binding site is contributed by asparagine 112. Residue arginine 167 participates in anthranilate binding. Positions 225 and 226 each coordinate Mg(2+).

This sequence belongs to the anthranilate phosphoribosyltransferase family. As to quaternary structure, homodimer. Mg(2+) is required as a cofactor.

The enzyme catalyses N-(5-phospho-beta-D-ribosyl)anthranilate + diphosphate = 5-phospho-alpha-D-ribose 1-diphosphate + anthranilate. It participates in amino-acid biosynthesis; L-tryptophan biosynthesis; L-tryptophan from chorismate: step 2/5. Catalyzes the transfer of the phosphoribosyl group of 5-phosphorylribose-1-pyrophosphate (PRPP) to anthranilate to yield N-(5'-phosphoribosyl)-anthranilate (PRA). The protein is Anthranilate phosphoribosyltransferase of Glaesserella parasuis serovar 5 (strain SH0165) (Haemophilus parasuis).